The sequence spans 151 residues: SsrA-binding protein (151 aa).

The disordered stretch occupies residues 131 to 151; that stretch reads KRESIKEKDWKRDQSRLIRQK.

It belongs to the SmpB family.

The protein resides in the cytoplasm. In terms of biological role, required for rescue of stalled ribosomes mediated by trans-translation. Binds to transfer-messenger RNA (tmRNA), required for stable association of tmRNA with ribosomes. tmRNA and SmpB together mimic tRNA shape, replacing the anticodon stem-loop with SmpB. tmRNA is encoded by the ssrA gene; the 2 termini fold to resemble tRNA(Ala) and it encodes a 'tag peptide', a short internal open reading frame. During trans-translation Ala-aminoacylated tmRNA acts like a tRNA, entering the A-site of stalled ribosomes, displacing the stalled mRNA. The ribosome then switches to translate the ORF on the tmRNA; the nascent peptide is terminated with the 'tag peptide' encoded by the tmRNA and targeted for degradation. The ribosome is freed to recommence translation, which seems to be the essential function of trans-translation. The chain is SsrA-binding protein from Rickettsia bellii (strain OSU 85-389).